A 163-amino-acid polypeptide reads, in one-letter code: Arginine repressor (163 aa).

It belongs to the ArgR family.

The protein resides in the cytoplasm. Its pathway is amino-acid biosynthesis; L-arginine biosynthesis [regulation]. Regulates arginine biosynthesis genes. In Anaeromyxobacter dehalogenans (strain 2CP-C), this protein is Arginine repressor.